The primary structure comprises 614 residues: Vitamin B12 transporter BtuB (614 aa).

An N-terminal signal peptide occupies residues 1 to 20; that stretch reads MIKKASLLTACSVTAFSAWA. Residues 26–33 carry the TonB box motif; the sequence is DTLVVTAN. The TBDR plug domain occupies 38–152; that stretch reads PRSTVLAPTT…IGGVVNIITT (115 aa). Residues L83, S85, N92, and 110 to 111 contribute to the cyanocob(III)alamin site; that span reads VS. One can recognise a TBDR beta-barrel domain in the interval 155-614; sequence EPGTEISAGW…EYTLSGSYTF (460 aa). 3 beta stranded membrane-spanning segments follow: residues 158–165, 169–178, and 184–195; these read TEISAGWG, YQNYDVSTQQ, and TRVTLLGDYAHT. D199, Q211, D213, and D215 together coordinate Ca(2+). Transmembrane regions (beta stranded) follow at residues 217-227 and 232-248; these read FLSKTLYGALE and DAWSGFVRGYGYDNRTN. The Ca(2+) site is built by Y249 and D250. Residue A251 coordinates cyanocob(III)alamin. Position 261 (D261) interacts with Ca(2+). 14 consecutive transmembrane segments (beta stranded) span residues 263–277, 279–296, 309–325, 328–337, 353–369, 371–381, 385–400, 403–417, 434–443, 449–458, 473–490, 494–509, 517–529, and 535–550; these read RKLYSQSWDAGLRYN, ELIKSQLITSYSHSKDYN, TLDEMKQYTVQWANNVI, HGSIGAGVDW, YDQRNTGIYLTGLQQVG, FTFEGAARNDD, FGRHGTWQTSAGWEFI, YRFIASYGTSYKAPN, KSKQWEGAFE, VNWRISGYRN, YYNEGKARIKGVEATANF, PLTHTVSYDYVDARNA, RRAKQQVKYQLDW, and DWGITYQYLGTRYDKD. T309 is a cyanocob(III)alamin binding site. R517 lines the cyanocob(III)alamin pocket. Residue Y551 participates in cyanocob(III)alamin binding. 3 beta stranded membrane-spanning segments follow: residues 558–572, 585–596, and 602–614; these read TVKMGGVSLWDLAVA, IANLFDKDYETV, and AGREYTLSGSYTF. Positions 597-614 match the TonB C-terminal box motif; it reads YGYQTAGREYTLSGSYTF.

It belongs to the TonB-dependent receptor family. BtuB (TC 1.B.14.3.1) subfamily.

The protein localises to the cell outer membrane. In terms of biological role, involved in the active translocation of vitamin B12 (cyanocobalamin) across the outer membrane to the periplasmic space. It derives its energy for transport by interacting with the trans-periplasmic membrane protein TonB. The protein is Vitamin B12 transporter BtuB of Escherichia coli O139:H28 (strain E24377A / ETEC).